Consider the following 327-residue polypeptide: MTHTLRVIFAGTPEFAAAALAAIHEAGFPVPLVLTQPDRPAGRGMKLQASAVKRYAVEHGIPVAQPPSLRRAGKYPGEAADAIELLRTTPHDVMVVAAYGLLLPQEVLDIPRAGCINIHASLLPRWRGAAPIHRAIEAGDAETGVTLMQMDVGLDTGAMIEEARVAIAPDDTTATLHDRLAADGARLIVDALVRLERDGALPATPQPADGVTYAEKIGKHEAALDWRKPADVLARQVRAFDPFPGGVATLDGAAIKLWAAEPVAARGDAVPGTIVDAAPEGVIVACGSGALRVTQLQKPGGKRLPAREFLAGSPLAAGQRFALPDGA.

121 to 124 (SLLP) provides a ligand contact to (6S)-5,6,7,8-tetrahydrofolate.

It belongs to the Fmt family.

It carries out the reaction L-methionyl-tRNA(fMet) + (6R)-10-formyltetrahydrofolate = N-formyl-L-methionyl-tRNA(fMet) + (6S)-5,6,7,8-tetrahydrofolate + H(+). In terms of biological role, attaches a formyl group to the free amino group of methionyl-tRNA(fMet). The formyl group appears to play a dual role in the initiator identity of N-formylmethionyl-tRNA by promoting its recognition by IF2 and preventing the misappropriation of this tRNA by the elongation apparatus. This chain is Methionyl-tRNA formyltransferase, found in Burkholderia ambifaria (strain MC40-6).